The primary structure comprises 319 residues: Forkhead box protein E3 (319 aa).

The segment at M1–R69 is disordered. A compositionally biased stretch (low complexity) spans A44 to P53. The fork-head DNA-binding region spans K71–K165.

Its subcellular location is the nucleus. Transcription factor that controls lens epithelial cell growth through regulation of proliferation, apoptosis and cell cycle. During lens development, controls the ratio of the lens fiber cells to the cells of the anterior lens epithelium by regulating the rate of proliferation and differentiation. Controls lens vesicle closure and subsequent separation of the lens vesicle from ectoderm. Controls the expression of DNAJB1 in a pathway that is crucial for the development of the anterior segment of the eye. The chain is Forkhead box protein E3 (FOXE3) from Homo sapiens (Human).